The following is a 178-amino-acid chain: 3-hydroxyacyl-[acyl-carrier-protein] dehydratase FabZ (178 aa).

The active site involves His-54.

It belongs to the thioester dehydratase family. FabZ subfamily.

Its subcellular location is the cytoplasm. It carries out the reaction a (3R)-hydroxyacyl-[ACP] = a (2E)-enoyl-[ACP] + H2O. Involved in unsaturated fatty acids biosynthesis. Catalyzes the dehydration of short chain beta-hydroxyacyl-ACPs and long chain saturated and unsaturated beta-hydroxyacyl-ACPs. This Yersinia enterocolitica protein is 3-hydroxyacyl-[acyl-carrier-protein] dehydratase FabZ.